A 591-amino-acid chain; its full sequence is MADRGQRRGCAPGIASALRASFQGKSRPWTQTRYWAFALLTPLVVAMVLTGCSASGTQLELAPTADRRAAVGTTSDINQQDPATLQDGGNLRLSLTDFPPNFNILHIDGNNAEVAAMMKATLPRAFIIGPDGSTTVDTNYFTSIELTRTAPQVVTYTINPEAVWSDGTPITWRDIASQIHAISGADKAFEIASSSGAERVASVTRGVDDRQAVVTFAKPYAEWRGMFAGNGMLLPASMTATPEAFNKGQLDGPGPSAGPFVVSALDRTAQRIVLTRNPRWWGARPRLDSITYLVLDDAARLPALQNNTIDATGVGTLDQLTIAARTKGISIRRAPGPSWYHFTLNGAPGSILADKALRLAIAKGIDRYTIARVAQYGLTSDPVPLNNHVFVAGQDGYQDNSGVVAYNPEQAKRELDALGWRRSGAFREKDGRQLVIRDLFYDAQSTRQFAQIAQHTLAQIGVKLELQAKSGSGFFSDYVNVGAFDIAQFGWVGDAFPLSSLTQIYASDGESNFGKIGSPQIDAAIERTLAELDPGKARALANQVDELIWAEGFSLPLTQSPGTVAVRSTLANFGATGLADLDYTAIGFMRR.

Belongs to the bacterial solute-binding protein 5 family. The complex is composed of an ATP-binding protein (OppD), two transmembrane proteins (OppB and OppC) and a solute-binding protein (OppA).

It localises to the periplasm. Functionally, part of the ABC transporter complex OppABCD involved in the uptake of oligopeptides. Peptide-binding protein that shows broad specificity but a moderate preference for hydrophobic oligopeptides and those that are 6-16 amino acids long. The sequence is that of Oligopeptide-binding protein OppA from Mycobacterium bovis (strain ATCC BAA-935 / AF2122/97).